The sequence spans 487 residues: MKKLDQLTFDNRFARLGDAFSTEVLPEPIEQPRLVVASSDAMALLDLDPAEAQREEFAELFAGHKLWGEAEPRAMVYSGHQFGGYTPRLGDGRGLLLGEVVNAAGEHWDLHLKGAGQTPYSRMGDGRAVLRSSIREFLASEHLHALGIPSSRALCVTTSDTPVWREKQERAAMVLRLAPSHVRFGHFEYFYYTRQHEQLKVLGEHVLANHFPQCLTQDEPWLAMFREVLERTAAMIAHWQAYGFCHGVMNTDNMSILGITFDYGPYAFLDDFDANHICNHSDDTGRYSFSNQVPIAHWNLAALAQALTPMIEVEKLRETLELFLPLYQAHYLDLMRKRLGLTSAEDDDEALVQRLLQLMQQGKATDYSLFFRQLGEQAPADALQVVRNDFVDLAGFDAWGRDYLARCEREGQQQDERRARMHAVNPLYILRNYLAQQVIEAAEAGDYGPVRELHAVLSRPFDEQPGMQRYAQRPPEWGKHLEISCSS.

Positions 90, 92, 93, 113, 125, 126, 176, and 183 each coordinate ATP. D252 (proton acceptor) is an active-site residue. 2 residues coordinate Mg(2+): N253 and D262. ATP is bound at residue D262.

This sequence belongs to the SELO family. The cofactor is Mg(2+). Mn(2+) serves as cofactor.

It catalyses the reaction L-seryl-[protein] + ATP = 3-O-(5'-adenylyl)-L-seryl-[protein] + diphosphate. The enzyme catalyses L-threonyl-[protein] + ATP = 3-O-(5'-adenylyl)-L-threonyl-[protein] + diphosphate. It carries out the reaction L-tyrosyl-[protein] + ATP = O-(5'-adenylyl)-L-tyrosyl-[protein] + diphosphate. The catalysed reaction is L-histidyl-[protein] + UTP = N(tele)-(5'-uridylyl)-L-histidyl-[protein] + diphosphate. It catalyses the reaction L-seryl-[protein] + UTP = O-(5'-uridylyl)-L-seryl-[protein] + diphosphate. The enzyme catalyses L-tyrosyl-[protein] + UTP = O-(5'-uridylyl)-L-tyrosyl-[protein] + diphosphate. Functionally, nucleotidyltransferase involved in the post-translational modification of proteins. It can catalyze the addition of adenosine monophosphate (AMP) or uridine monophosphate (UMP) to a protein, resulting in modifications known as AMPylation and UMPylation. The polypeptide is Protein nucleotidyltransferase YdiU (Ectopseudomonas mendocina (strain ymp) (Pseudomonas mendocina)).